A 116-amino-acid chain; its full sequence is Protein Wnt-5a (116 aa).

Residue S1 is the site of O-palmitoleoyl serine; by PORCN attachment. Residues N69 and N83 are each glycosylated (N-linked (GlcNAc...) asparagine). C82 and C97 are joined by a disulfide.

It belongs to the Wnt family. Post-translationally, palmitoleoylation is required for efficient binding to frizzled receptors. Depalmitoleoylation leads to Wnt signaling pathway inhibition.

The protein resides in the secreted. Its subcellular location is the extracellular space. It is found in the extracellular matrix. Ligand for members of the frizzled family of seven transmembrane receptors. Can activate or inhibit canonical Wnt signaling, depending on receptor context. Required during embryogenesis for extension of the primary anterior-posterior axis. This chain is Protein Wnt-5a (WNT5A), found in Anser caerulescens (Snow goose).